A 517-amino-acid chain; its full sequence is GMP synthase [glutamine-hydrolyzing] (517 aa).

A Glutamine amidotransferase type-1 domain is found at 9 to 199 (RILILDFGSQ…VLGVCGCERL (191 aa)). Residue Cys86 is the Nucleophile of the active site. Catalysis depends on residues His173 and Glu175. The GMPS ATP-PPase domain maps to 200–392 (WTSESIIEDA…LGLPYNMLYR (193 aa)). 227 to 233 (SGGVDSS) provides a ligand contact to ATP.

In terms of assembly, homodimer.

It catalyses the reaction XMP + L-glutamine + ATP + H2O = GMP + L-glutamate + AMP + diphosphate + 2 H(+). The protein operates within purine metabolism; GMP biosynthesis; GMP from XMP (L-Gln route): step 1/1. Functionally, catalyzes the synthesis of GMP from XMP. The sequence is that of GMP synthase [glutamine-hydrolyzing] from Vibrio cholerae serotype O1 (strain ATCC 39541 / Classical Ogawa 395 / O395).